The sequence spans 254 residues: Thiazole synthase (254 aa).

The Schiff-base intermediate with DXP role is filled by Lys-96. Residues Gly-157, 183-184, and 205-206 each bind 1-deoxy-D-xylulose 5-phosphate; these read AG and NT.

It belongs to the ThiG family. In terms of assembly, homotetramer. Forms heterodimers with either ThiH or ThiS.

The protein resides in the cytoplasm. It catalyses the reaction [ThiS sulfur-carrier protein]-C-terminal-Gly-aminoethanethioate + 2-iminoacetate + 1-deoxy-D-xylulose 5-phosphate = [ThiS sulfur-carrier protein]-C-terminal Gly-Gly + 2-[(2R,5Z)-2-carboxy-4-methylthiazol-5(2H)-ylidene]ethyl phosphate + 2 H2O + H(+). The protein operates within cofactor biosynthesis; thiamine diphosphate biosynthesis. In terms of biological role, catalyzes the rearrangement of 1-deoxy-D-xylulose 5-phosphate (DXP) to produce the thiazole phosphate moiety of thiamine. Sulfur is provided by the thiocarboxylate moiety of the carrier protein ThiS. In vitro, sulfur can be provided by H(2)S. The protein is Thiazole synthase of Clostridium perfringens (strain SM101 / Type A).